Reading from the N-terminus, the 668-residue chain is MGVCCATAPASDRRSRHPDMQNWNVAVTDFSKTPLLDTIRTPADLRKLRVEQLRQVADELRKETIDAVSVTGGHFGAGLGVVELTTAIHYIFDTPRDRLIWDVGHQAYPHKILTGRRDRIRTLRTGGGLSGFTKRTESDYDPFGAAHSSTSISASLGMAVARDLSGGKNNVIAVIGDGAMSAGMAYEAMNNAGAMNSRLIVILNDNDMSIAPPVGAMSAYLSRLYSGKTYRSLREAAKQLGKHLPKMIADRAERVEEYSRGFMVNSGTLFEELGFYYVGPIDGHNLDHLLPVLKNVRDMENGPILLHVVTQKGKGYGPAEAAADKYHAVVKFDVSTGAQSKSKPNAPAYQNVFGQSLVKEAEKDDKIIAITAAMPSGTGVDIFNKAFPKRTFDVGIAEQHAVTFAAGLATEGFKPFCAIYSTFLQRGYDQIVHDVAIQSLPVRFAIDRAGLVGADGATHAGSFDNAYLGCLPNFVIMAASDEAELVHMVATQVAINDRPSAVRYPRGEGRGVEMPEVGVPLPIGKGRIVRQGSKVALLSLGTRLAECEKAADELAAHGLSTTIADARFMKPLDVDLVLKLARDHDVLITIEEGSIGGFGSHVMQTLAEHGALDSGQVRVRAMVLPDEFLDHDTPNAMYASVGLDDRGIVAKVFEALGKDVTTETVKLA.

Thiamine diphosphate is bound by residues H105 and 146 to 148 (AHS). D177 contacts Mg(2+). Thiamine diphosphate contacts are provided by residues 178 to 179 (GA), N206, Y316, and E398. N206 is a binding site for Mg(2+).

It belongs to the transketolase family. DXPS subfamily. Homodimer. Requires Mg(2+) as cofactor. It depends on thiamine diphosphate as a cofactor.

It catalyses the reaction D-glyceraldehyde 3-phosphate + pyruvate + H(+) = 1-deoxy-D-xylulose 5-phosphate + CO2. It functions in the pathway metabolic intermediate biosynthesis; 1-deoxy-D-xylulose 5-phosphate biosynthesis; 1-deoxy-D-xylulose 5-phosphate from D-glyceraldehyde 3-phosphate and pyruvate: step 1/1. In terms of biological role, catalyzes the acyloin condensation reaction between C atoms 2 and 3 of pyruvate and glyceraldehyde 3-phosphate to yield 1-deoxy-D-xylulose-5-phosphate (DXP). The sequence is that of 1-deoxy-D-xylulose-5-phosphate synthase from Nitrobacter hamburgensis (strain DSM 10229 / NCIMB 13809 / X14).